Here is a 530-residue protein sequence, read N- to C-terminus: MAQIKNTIFKTTSKRTNHGFILIVGILILFLLDFSFFRVLIWKVPNESPWSSNHFYNFLYEYFSLQEKQKKNYRILIVGSSIAHYSFDREAFGKEILERIGKNVEVEFLSYAGMTPLDAWLCRQKIVELKPDFVIFPINFIDWRLHRAYSLNPEYKNETIDSKILLLDALDFFEAPQSRFIFPLETTIEFFAELGFAKTSEYISAFLFGFYRYKDIFWKNLRSLYDHRYGRNISYHGYNGVQIPERVTSLGWTGKNFSFILTEKMKTEGFLVQIVPEILASGPLKITFKKKNKVQSFSFIEPGWKKILLDNSFMVEDPSLLITAELSSSWIPFFAVGENKDWNYDRLGVRLQQTFGTEIPKNGMQYTREERLEDIRYLYMSDLEYSKYFNFRLLEDFDQRPGIGYLIALKDAKLRIREEKFVPVLHFQYLRKFSSFLKEKKVPLWIINNPENPISLDWYVKSNWYKDHLLFLKELSGDLVFFSDLKDSLSMQDFSDYHHFTFPGMMKMSPIYANEFVKISERQSKNLLKP.

This is an uncharacterized protein from Leptospira interrogans serogroup Icterohaemorrhagiae serovar Lai (strain 56601).